A 95-amino-acid chain; its full sequence is Aspartyl/glutamyl-tRNA(Asn/Gln) amidotransferase subunit C (95 aa).

The protein belongs to the GatC family. Heterotrimer of A, B and C subunits.

It catalyses the reaction L-glutamyl-tRNA(Gln) + L-glutamine + ATP + H2O = L-glutaminyl-tRNA(Gln) + L-glutamate + ADP + phosphate + H(+). The catalysed reaction is L-aspartyl-tRNA(Asn) + L-glutamine + ATP + H2O = L-asparaginyl-tRNA(Asn) + L-glutamate + ADP + phosphate + 2 H(+). Functionally, allows the formation of correctly charged Asn-tRNA(Asn) or Gln-tRNA(Gln) through the transamidation of misacylated Asp-tRNA(Asn) or Glu-tRNA(Gln) in organisms which lack either or both of asparaginyl-tRNA or glutaminyl-tRNA synthetases. The reaction takes place in the presence of glutamine and ATP through an activated phospho-Asp-tRNA(Asn) or phospho-Glu-tRNA(Gln). This is Aspartyl/glutamyl-tRNA(Asn/Gln) amidotransferase subunit C from Rhizobium etli (strain ATCC 51251 / DSM 11541 / JCM 21823 / NBRC 15573 / CFN 42).